A 513-amino-acid polypeptide reads, in one-letter code: Nuclear pore complex protein NUP58 (513 aa).

Disordered regions lie at residues 28–62 (QTNSIFSQSQPQQTNSIFSQSQPQQTNSIFSQPQQ), 217–239 (SVGSQPSQGQGTNPAPASSGQQQ), and 356–513 (RETA…TTRR). Over residues 30 to 50 (NSIFSQSQPQQTNSIFSQSQP) the composition is skewed to polar residues. 2 stretches are compositionally biased toward low complexity: residues 51 to 62 (QQTNSIFSQPQQ) and 217 to 227 (SVGSQPSQGQG). The segment covering 356–365 (RETAKQEAAA) has biased composition (basic and acidic residues). Residues 377 to 386 (STTSTQPSTQ) show a composition bias toward low complexity. Positions 393–427 (SSATPGGSNPPQTSVPTSNPSSGAGFSFLNTPASG) are enriched in polar residues. The segment covering 428–446 (PSSSLFATPSSTAPTSSLF) has biased composition (low complexity). 6 consecutive repeat copies span residues 446-447 (FG), 458-459 (FG), 466-467 (FG), 473-474 (FG), 486-487 (FG), and 497-498 (FG). The 6 X 2 AA repeats of F-G stretch occupies residues 446–498 (FGPSPTPTQTPLFGSSPASTFGSTQSLFGQTTPSLTMPSQFGGATPGSGASFG). Residues 452–484 (PTQTPLFGSSPASTFGSTQSLFGQTTPSLTMPS) show a composition bias toward polar residues. Basic residues predominate over residues 504–513 (SRPKSRTTRR).

The protein belongs to the NUP58 family. As to quaternary structure, part of the nuclear pore complex (NPC). The NPC has an eight-fold symmetrical structure comprising a central transport channel and two rings, the cytoplasmic and nuclear rings, to which eight filaments are attached. The cytoplasmic filaments have loose ends, while the nuclear filaments are joined in a distal ring, forming a nuclear basket. NPCs are highly dynamic in configuration and composition, and can be devided in 3 subcomplexes, the NUP62 subcomplex, the NUP107-160 subcomplex and the NUP93 subcomplex, containing approximately 30 different nucleoporin proteins. Interacts with GAI, NUP62, SKP1A and SKP1B. Ubiquitous. Higherst expression in cauline leaves, lowest in roots.

It is found in the nucleus envelope. The protein resides in the nucleus. It localises to the nuclear pore complex. Involved in nucleocytoplasmic trafficking. May have regulatory roles in the gibberellin pathway, in auxin signaling and in light perception. This chain is Nuclear pore complex protein NUP58, found in Arabidopsis thaliana (Mouse-ear cress).